The primary structure comprises 116 residues: Large ribosomal subunit protein bL19 (116 aa).

The protein belongs to the bacterial ribosomal protein bL19 family.

Functionally, this protein is located at the 30S-50S ribosomal subunit interface and may play a role in the structure and function of the aminoacyl-tRNA binding site. This chain is Large ribosomal subunit protein bL19, found in Streptomyces avermitilis (strain ATCC 31267 / DSM 46492 / JCM 5070 / NBRC 14893 / NCIMB 12804 / NRRL 8165 / MA-4680).